We begin with the raw amino-acid sequence, 393 residues long: Succinate--CoA ligase [ADP-forming] subunit beta (393 aa).

In terms of domain architecture, ATP-grasp spans 9 to 245 (KMLFAQYGIP…PSQEDKCETY (237 aa)). ATP-binding positions include Lys-46, 53–55 (GRG), Glu-99, Ile-102, and Glu-107. Mg(2+) is bound by residues Asn-200 and Asp-214. Residues Asn-265 and 322–324 (GIV) contribute to the substrate site.

Belongs to the succinate/malate CoA ligase beta subunit family. Heterotetramer of two alpha and two beta subunits. The cofactor is Mg(2+).

The catalysed reaction is succinate + ATP + CoA = succinyl-CoA + ADP + phosphate. It carries out the reaction GTP + succinate + CoA = succinyl-CoA + GDP + phosphate. Its pathway is carbohydrate metabolism; tricarboxylic acid cycle; succinate from succinyl-CoA (ligase route): step 1/1. Succinyl-CoA synthetase functions in the citric acid cycle (TCA), coupling the hydrolysis of succinyl-CoA to the synthesis of either ATP or GTP and thus represents the only step of substrate-level phosphorylation in the TCA. The beta subunit provides nucleotide specificity of the enzyme and binds the substrate succinate, while the binding sites for coenzyme A and phosphate are found in the alpha subunit. The chain is Succinate--CoA ligase [ADP-forming] subunit beta from Baumannia cicadellinicola subsp. Homalodisca coagulata.